The following is a 515-amino-acid chain: Vacuolar fusion protein CCZ1 homolog A (515 aa).

The protein belongs to the CCZ1 family. In terms of assembly, interacts with MON1.

It is found in the endosome. Its subcellular location is the prevacuolar compartment. In terms of biological role, plays an important role in membrane trafficking through the secretory apparatus. In complex with MON1, acts as a guanine exchange factor (GEF) for RABG3F of the Rab7 protein family. Promotes the exchange of GDP to GTP, converting RABG3F from an inactive GDP-bound form into an active GTP-bound form. The RABG3F active form is involved in protein trafficking from prevacuolar compartments (PVCs) to vacuoles. May serve as a linker between Rab5 and Rab7 protein families in PVCs and mediate PVC maturation. This is Vacuolar fusion protein CCZ1 homolog A from Arabidopsis thaliana (Mouse-ear cress).